The chain runs to 598 residues: NADH-quinone oxidoreductase subunit C/D (598 aa).

The interval 1–189 (MTDLTTSDST…DPFVLTKQKE (189 aa)) is NADH dehydrogenase I subunit C. Residues 213–598 (DFMFLNLGPN…IDFVMSDVDR (386 aa)) are NADH dehydrogenase I subunit D.

This sequence in the N-terminal section; belongs to the complex I 30 kDa subunit family. The protein in the C-terminal section; belongs to the complex I 49 kDa subunit family. In terms of assembly, NDH-1 is composed of 13 different subunits. Subunits NuoB, CD, E, F, and G constitute the peripheral sector of the complex.

Its subcellular location is the cell inner membrane. It catalyses the reaction a quinone + NADH + 5 H(+)(in) = a quinol + NAD(+) + 4 H(+)(out). Its function is as follows. NDH-1 shuttles electrons from NADH, via FMN and iron-sulfur (Fe-S) centers, to quinones in the respiratory chain. The immediate electron acceptor for the enzyme in this species is believed to be ubiquinone. Couples the redox reaction to proton translocation (for every two electrons transferred, four hydrogen ions are translocated across the cytoplasmic membrane), and thus conserves the redox energy in a proton gradient. This chain is NADH-quinone oxidoreductase subunit C/D, found in Yersinia enterocolitica serotype O:8 / biotype 1B (strain NCTC 13174 / 8081).